The sequence spans 918 residues: MTDTNEKIRSLFLTALMVFSVFAGTIAFSGGAAAAANVSVQQAAEYDSGTVELALNGSTGSTVNTGDIDIYVDGNKNPSNYGVSSVDTTDDGTTGRLQFSLDQDVQPNRNLTVKVSGLTGGDNTVVAEDIDVTSQTIDADDDSGDTNAFRGEVLAIRADGDTDNDDATSSTKIVVEDSNGAVVTQDTYTANSKVYTYETENLDTGEEYEVSVAGDADENITISNLDLNVNIDDDVGDGANIDDKDTLAVNVSTTRGGEPANATLFNEDDDKVATQVESLKGNENVVFDFGNQSADDSPYYVKVTDNQTGVSAESDQINVSESDDGEASFESSTVQDNIGDVVNITVQVDNTEDAVINIGDENDDNYYIQGQLEDDNGDGEVTVQFNSYTAGNYSDSTVLSVPGDDDIDNIKEGGDYTRGSLSGDTLEAGSYSMNVTAGTSPDVTSPDTVGTLRLNENSVENIQTWAAPSDADIDDDDVDIYDRIGENLTQSDDVAAEDVVVHEIQASGIEGALEYEQEDGSASDVTEAFIAATDTTPYRINDSDATTSGLRLYVNRTDVGANADANPIDFSNSSDAVTVVDDPDNNTYFVAVDTSDVVFENGKTIVKEEDTRLNATFSVREGPLTDDRNSDSAIYTTSERDATLDLDDSGVVTVSAAAGQEVTGETNVAPGSELEVEMESESDANPFVIRPEVDVATDGTYTATADFQDYSAGTNFTVQTLDVDGDSDFSDEEDGRIVEADTATVSISEQESDGSEVVVDSAQLSEGGFIAIHAGNASGDVVGNSEYLGAGSHEDITVTLDEPMDEDFTAVAMPHQDTNGNEAYDFPGDDDPYTQNGSAVTDSANVTIVEEEQTEAPDTETETEAPDTETEEETDAPATDEPATDESETTAAEGPGFTAAIALIALVAAALLAVRRDN.

A signal peptide spans 1 to 34 (MTDTNEKIRSLFLTALMVFSVFAGTIAFSGGAAA). Asn37, Asn56, Asn110, Asn219, Asn250, Asn261, and Asn291 each carry an N-linked (GlcNAc...) asparagine glycan. Residue Asn306 is glycosylated (N-linked (GalNAc...) asparagine). Residues Asn318, Asn343, Asn392, Asn434, Asn487, Asn541, Asn555, Asn572, Asn585, Asn614, Asn715, Asn776, Asn836, and Asn845 are each glycosylated (N-linked (GlcNAc...) asparagine). The segment at 815–894 (HQDTNGNEAY…DESETTAAEG (80 aa)) is disordered. Positions 833–846 (YTQNGSAVTDSANV) are enriched in polar residues. Residues 849 to 875 (VEEEQTEAPDTETETEAPDTETEEETD) show a composition bias toward acidic residues. Residues 894–914 (GPGFTAAIALIALVAAALLAV) traverse the membrane as a helical segment. The short motif at 895-897 (PGF) is the PGF sorting signal element.

The protein belongs to the halobacterial S-layer protein family. Post-translationally, N-glycosylated on Asn-306; this N-linked glycan is a branched trisaccharide containing 2-amino-6-sulfo-2,6-dideoxy-glucose (sulfoquinovosamine). In terms of processing, cleaved by the archaeosortase ArtA at the C-terminus, with removal of a short hydrophobic segment. Lipidation.

The protein localises to the secreted. Its subcellular location is the cell wall. It is found in the S-layer. It localises to the cell membrane. Its function is as follows. S-layer protein. The S-layer is a paracrystalline mono-layered assembly of proteins which coat the surface of the cell. In H.hispanica, the S-layer contains two different glycoproteins, Slg1 and Slg2, which share highly similar amino acid sequences. The sequence is that of Cell surface glycoprotein 1 from Haloarcula hispanica (strain ATCC 33960 / DSM 4426 / JCM 8911 / NBRC 102182 / NCIMB 2187 / VKM B-1755).